The following is a 250-amino-acid chain: UPF0309 protein BH0227 (250 aa).

The 184-residue stretch at 31-214 (VAESIQNGGI…KRMADNGYEP (184 aa)) folds into the SIS domain.

This sequence belongs to the UPF0309 family.

The polypeptide is UPF0309 protein BH0227 (Halalkalibacterium halodurans (strain ATCC BAA-125 / DSM 18197 / FERM 7344 / JCM 9153 / C-125) (Bacillus halodurans)).